Reading from the N-terminus, the 379-residue chain is Proton extrusion protein PxcA (379 aa).

4 consecutive transmembrane segments (helical) span residues 153–173 (TLVS…LQQI), 254–274 (AIKN…VCLF), 300–320 (FVII…GWTV), and 337–357 (FIDL…KYWI).

The protein belongs to the CemA family.

It localises to the cell inner membrane. Functionally, required for H(+) efflux immediately after light irradiation to form a rapid H(+) concentration gradient across the thylakoid membranes. Together with PxcL, contributes to transient H(+) uptake following dark to light transition. This Synechococcus sp. (strain RCC307) protein is Proton extrusion protein PxcA.